Here is a 206-residue protein sequence, read N- to C-terminus: Recombination protein RecR (206 aa).

A C4-type zinc finger spans residues 58 to 73 (CENCHNISDTKVCEIC). The Toprim domain maps to 81–176 (QTICVVEDIR…IISTIARGIS (96 aa)).

It belongs to the RecR family.

Its function is as follows. May play a role in DNA repair. It seems to be involved in an RecBC-independent recombinational process of DNA repair. It may act with RecF and RecO. The sequence is that of Recombination protein RecR from Flavobacterium johnsoniae (strain ATCC 17061 / DSM 2064 / JCM 8514 / BCRC 14874 / CCUG 350202 / NBRC 14942 / NCIMB 11054 / UW101) (Cytophaga johnsonae).